The primary structure comprises 184 residues: MANVVDQSKEQMKKSVESTKENFAGIRTGRANPALLNGIVVEYYGAPTPLKHVATIGVPEPRTLSVTPFDPSQANAVEKALRDSDLGASPRRNGSAILLTMPELTEDRRKEYVKLAKSKAEDGKVAVRNIRRKSKEAIDKAVKDGEMGEDEGDRLLKELDKVTKATTDELDALLEAKQKEIMEV.

Belongs to the RRF family.

It localises to the cytoplasm. In terms of biological role, responsible for the release of ribosomes from messenger RNA at the termination of protein biosynthesis. May increase the efficiency of translation by recycling ribosomes from one round of translation to another. The polypeptide is Ribosome-recycling factor (Bifidobacterium animalis subsp. lactis (strain AD011)).